The following is a 543-amino-acid chain: Early growth response protein 1 (543 aa).

Disordered regions lie at residues 1-105, 165-213, and 264-284; these read MAAA…AESF, TNPP…PTPN, and LGLG…TQQP. Positions 57–66 are enriched in low complexity; that stretch reads GSGSNSSSSS. Residues 67-77 are compositionally biased toward gly residues; it reads SGGGGGGGGGS. A compositionally biased stretch (low complexity) spans 167 to 189; sequence PPASSSSAPSPAASSASASQSPP. Lys-305 is covalently cross-linked (Glycyl lysine isopeptide (Lys-Gly) (interchain with G-Cter in SUMO2)). The segment at 318–339 is disordered; sequence PSRMRKYPNRPSKTPPHERPYA. 3 consecutive C2H2-type zinc fingers follow at residues 338–362, 368–390, and 396–418; these read YACP…IRIH, FQCR…IRTH, and FACD…TKIH. The tract at residues 409-487 is disordered; sequence DERKRHTKIH…GSSTYPSPVH (79 aa). A compositionally biased stretch (basic residues) spans 413-423; that stretch reads RHTKIHLRQKD. A compositionally biased stretch (low complexity) spans 429 to 486; it reads SVVASSATSSLSSYPSPVATSYPSPVTTSYPSPATTSYPSPVPTSFSSPGSSTYPSPV.

This sequence belongs to the EGR C2H2-type zinc-finger protein family. Interacts with SNAI1 and SP1 upon 12-O-tetradecanoylphorbol-13-acetate (TPA) induction. In terms of tissue distribution, detected in neutrophils (at protein level).

Its subcellular location is the nucleus. It localises to the cytoplasm. Its function is as follows. Transcriptional regulator. Recognizes and binds to the DNA sequence 5'-GCG(T/G)GGGCG-3'(EGR-site) in the promoter region of target genes. Binds double-stranded target DNA, irrespective of the cytosine methylation status. Regulates the transcription of numerous target genes, and thereby plays an important role in regulating the response to growth factors, DNA damage, and ischemia. Plays a role in the regulation of cell survival, proliferation and cell death. Activates expression of p53/TP53 and TGFB1, and thereby helps prevent tumor formation. Required for normal progress through mitosis and normal proliferation of hepatocytes after partial hepatectomy. Mediates responses to ischemia and hypoxia; regulates the expression of proteins such as IL1B and CXCL2 that are involved in inflammatory processes and development of tissue damage after ischemia. Regulates biosynthesis of luteinizing hormone (LHB) in the pituitary. Regulates the amplitude of the expression rhythms of clock genes: BMAL1, PER2 and NR1D1 in the liver via the activation of PER1 (clock repressor) transcription. Regulates the rhythmic expression of core-clock gene BMAL1 in the suprachiasmatic nucleus (SCN). This is Early growth response protein 1 (EGR1) from Homo sapiens (Human).